The chain runs to 456 residues: Putative E3 ubiquitin-protein ligase XBAT31 (456 aa).

5 ANK repeats span residues 45-74, 78-107, 112-141, 157-186, and 194-224; these read DRHSVLHVAAANGQIEILSLLLERFTNPDL, HKQTPLMLAAMYGRISCVKKLAEVGANILM, NRRTCLHYAAYYGHANCVQAILSAAQSSPV, KGATPLHLAARQRRPECVNVLLDSGSLVCA, and PGSTPLHLAARSGSIDCVRKLLAWGADRLQR. An RING-type zinc finger spans residues 319–368; the sequence is CCICFEQVCTIEVKDCGHQMCAQCTLALCCHNKPNPTTSTVTPPVCPFCR.

The catalysed reaction is S-ubiquitinyl-[E2 ubiquitin-conjugating enzyme]-L-cysteine + [acceptor protein]-L-lysine = [E2 ubiquitin-conjugating enzyme]-L-cysteine + N(6)-ubiquitinyl-[acceptor protein]-L-lysine.. Its pathway is protein modification; protein ubiquitination. In terms of biological role, no E3 ubiquitin-protein ligase activity observed when associated with the E2 enzyme UBC8 in vitro. The protein is Putative E3 ubiquitin-protein ligase XBAT31 (XBAT31) of Arabidopsis thaliana (Mouse-ear cress).